We begin with the raw amino-acid sequence, 143 residues long: 3-dehydroquinate dehydratase (143 aa).

The active-site Proton acceptor is tyrosine 22. The substrate site is built by asparagine 73, histidine 79, and aspartate 86. Histidine 99 serves as the catalytic Proton donor. Substrate-binding positions include 100-101 (IS) and arginine 110.

This sequence belongs to the type-II 3-dehydroquinase family. In terms of assembly, homododecamer.

The catalysed reaction is 3-dehydroquinate = 3-dehydroshikimate + H2O. Its pathway is metabolic intermediate biosynthesis; chorismate biosynthesis; chorismate from D-erythrose 4-phosphate and phosphoenolpyruvate: step 3/7. Catalyzes a trans-dehydration via an enolate intermediate. This Mycolicibacterium paratuberculosis (strain ATCC BAA-968 / K-10) (Mycobacterium paratuberculosis) protein is 3-dehydroquinate dehydratase.